A 147-amino-acid chain; its full sequence is Hemoglobin subunit epsilon-4 (147 aa).

Positions H3–H147 constitute a Globin domain. 2 residues coordinate heme b: H64 and H93.

Belongs to the globin family. As to expression, red blood cells.

In terms of biological role, hemoglobin epsilon chain is a beta-type chain found in early embryos. The polypeptide is Hemoglobin subunit epsilon-4 (HBE4) (Bos taurus (Bovine)).